We begin with the raw amino-acid sequence, 346 residues long: Anthranilate phosphoribosyltransferase (346 aa).

Residues glycine 88, 91 to 92, threonine 96, 98 to 101, 116 to 124, and alanine 128 each bind 5-phospho-alpha-D-ribose 1-diphosphate; these read GD, NIST, and KHGNRAVSS. Glycine 88 provides a ligand contact to anthranilate. Serine 100 lines the Mg(2+) pocket. Asparagine 119 contacts anthranilate. Arginine 174 contacts anthranilate. Mg(2+) contacts are provided by aspartate 233 and glutamate 234.

The protein belongs to the anthranilate phosphoribosyltransferase family. Homodimer. Mg(2+) serves as cofactor.

It carries out the reaction N-(5-phospho-beta-D-ribosyl)anthranilate + diphosphate = 5-phospho-alpha-D-ribose 1-diphosphate + anthranilate. It participates in amino-acid biosynthesis; L-tryptophan biosynthesis; L-tryptophan from chorismate: step 2/5. Catalyzes the transfer of the phosphoribosyl group of 5-phosphorylribose-1-pyrophosphate (PRPP) to anthranilate to yield N-(5'-phosphoribosyl)-anthranilate (PRA). This is Anthranilate phosphoribosyltransferase from Paramagnetospirillum magneticum (strain ATCC 700264 / AMB-1) (Magnetospirillum magneticum).